Here is a 130-residue protein sequence, read N- to C-terminus: Keratin, high-sulfur matrix protein, IIIA3A (130 aa).

In terms of tissue distribution, wool.

In terms of biological role, the keratin products of mammalian epidermal derivatives such as wool and hair consist of microfibrils embedded in a rigid matrix of other proteins. The matrix proteins include the high-sulfur and high-tyrosine keratins, having molecular weights of 6-20 kDa, whereas the microfibrils contain the larger, low-sulfur keratins (40-56 kDa). This chain is Keratin, high-sulfur matrix protein, IIIA3A, found in Ovis aries (Sheep).